Here is a 314-residue protein sequence, read N- to C-terminus: ATP synthase gamma chain (314 aa).

This sequence belongs to the ATPase gamma chain family. As to quaternary structure, F-type ATPases have 2 components, CF(1) - the catalytic core - and CF(0) - the membrane proton channel. CF(1) has five subunits: alpha(3), beta(3), gamma(1), delta(1), epsilon(1). CF(0) has three main subunits: a, b and c.

The protein localises to the cell membrane. Produces ATP from ADP in the presence of a proton gradient across the membrane. The gamma chain is believed to be important in regulating ATPase activity and the flow of protons through the CF(0) complex. This chain is ATP synthase gamma chain, found in Limosilactobacillus reuteri (strain DSM 20016) (Lactobacillus reuteri).